The following is a 455-amino-acid chain: Glutamate-1-semialdehyde 2,1-aminomutase (455 aa).

At lysine 286 the chain carries N6-(pyridoxal phosphate)lysine.

It belongs to the class-III pyridoxal-phosphate-dependent aminotransferase family. HemL subfamily. In terms of assembly, homodimer. It depends on pyridoxal 5'-phosphate as a cofactor.

The protein resides in the cytoplasm. It catalyses the reaction (S)-4-amino-5-oxopentanoate = 5-aminolevulinate. It functions in the pathway porphyrin-containing compound metabolism; protoporphyrin-IX biosynthesis; 5-aminolevulinate from L-glutamyl-tRNA(Glu): step 2/2. The protein is Glutamate-1-semialdehyde 2,1-aminomutase of Clavibacter michiganensis subsp. michiganensis (strain NCPPB 382).